The primary structure comprises 311 residues: DNA-directed RNA polymerase subunit alpha (311 aa).

Positions 1–227 are alpha N-terminal domain (alpha-NTD); sequence MNNISIKCLK…DLFTLLINNK (227 aa). The alpha C-terminal domain (alpha-CTD) stretch occupies residues 242–311; that stretch reads ISIEPYTNIA…LKNKLGIILK (70 aa).

This sequence belongs to the RNA polymerase alpha chain family. In plastids the minimal PEP RNA polymerase catalytic core is composed of four subunits: alpha, beta, beta', and beta''. When a (nuclear-encoded) sigma factor is associated with the core the holoenzyme is formed, which can initiate transcription.

The protein resides in the plastid. It is found in the chloroplast. It catalyses the reaction RNA(n) + a ribonucleoside 5'-triphosphate = RNA(n+1) + diphosphate. Its function is as follows. DNA-dependent RNA polymerase catalyzes the transcription of DNA into RNA using the four ribonucleoside triphosphates as substrates. The sequence is that of DNA-directed RNA polymerase subunit alpha from Phaeodactylum tricornutum (strain CCAP 1055/1).